The primary structure comprises 119 residues: Large ribosomal subunit protein P3 (119 aa).

The interval 81 to 119 (GAAAGAASGGAAAEAPKAEEKKEEEKEESEDDLGFSLFD) is disordered. The span at 84–95 (AGAASGGAAAEA) shows a compositional bias: low complexity.

This sequence belongs to the eukaryotic ribosomal protein P1/P2 family. Post-translationally, phosphorylated.

Plays an important role in the elongation step of protein synthesis. The sequence is that of Large ribosomal subunit protein P3 from Oryza sativa subsp. japonica (Rice).